The chain runs to 61 residues: MICHNQQSSQRPTIKTCPGETNCYKKRWRDHRGTIIERGCGCPSVKKGVGIYCCKTDKCNR.

4 disulfide bridges follow: cysteine 3-cysteine 23, cysteine 17-cysteine 40, cysteine 42-cysteine 53, and cysteine 54-cysteine 59.

Belongs to the three-finger toxin family. Short-chain subfamily. Type I alpha-neurotoxin sub-subfamily. As to expression, expressed by the venom gland.

It is found in the secreted. In terms of biological role, binds to muscle nicotinic acetylcholine receptor (nAChR) and inhibit acetylcholine from binding to the receptor, thereby impairing neuromuscular transmission. The sequence is that of Short neurotoxin 2 from Naja nivea (Cape cobra).